The primary structure comprises 1499 residues: ABC multidrug transporter A-2 (1499 aa).

Disordered regions lie at residues 1–66 (MAMQ…IDQE) and 80–107 (QISQ…NSDK). Residues 16–30 (ISSSAGQEVASTIRR) are compositionally biased toward polar residues. Over residues 31–51 (QFTDADADRIVETPLGEKADS) the composition is skewed to basic and acidic residues. The segment covering 80–94 (QISQKSAGPTNTFLD) has biased composition (polar residues). The region spanning 166–415 (LRSILGCRNR…FIDMGFDCPD (250 aa)) is the ABC transporter 1 domain. Asparagine 339 is a glycosylation site (N-linked (GlcNAc...) asparagine). Helical transmembrane passes span 526–546 (MTLA…SVFY), 561–581 (LLFF…LTLW), 606–626 (MIVD…ILYF), 635–655 (GHFF…SNIF), and 669–689 (MVPS…TIPV). An N-linked (GlcNAc...) asparagine glycan is attached at asparagine 763. A helical transmembrane segment spans residues 778 to 798 (GIILGFFFFFLAAYIICSELV). The ABC transporter 2 domain maps to 857–1100 (FHWQDVCYDI…LIKYFENKGS (244 aa)). Residue 893–900 (GVTGAGKT) coordinates ATP. Transmembrane regions (helical) follow at residues 1193 to 1213 (YIYS…FTFW), 1227 to 1247 (FAIF…MPYF), 1268 to 1288 (AFML…AVPA), 1317 to 1337 (LLIL…IAGI), and 1353 to 1373 (LCLI…FWIF). Asparagine 1414 carries N-linked (GlcNAc...) asparagine glycosylation. Residues 1466–1486 (GLLFVYIVFNIFAAIFLYWLI) form a helical membrane-spanning segment.

The protein belongs to the ABC transporter superfamily. ABCG family. PDR (TC 3.A.1.205) subfamily.

It localises to the cell membrane. The catalysed reaction is itraconazole(in) + ATP + H2O = itraconazole(out) + ADP + phosphate + H(+). It catalyses the reaction voriconazole(in) + ATP + H2O = voriconazole(out) + ADP + phosphate + H(+). Its activity is regulated as follows. The efflux inhibitor FK506 impairs the transport activity. Pleiotropic ABC efflux transporter that confers resistance to structurally and functionally unrelated compounds including azoles such as itraconazole, posaconazole, and voriconazole. The polypeptide is ABC multidrug transporter A-2 (Aspergillus fumigatus (strain ATCC MYA-4609 / CBS 101355 / FGSC A1100 / Af293) (Neosartorya fumigata)).